The primary structure comprises 331 residues: Probable protein phosphatase 2C 1 (331 aa).

The disordered stretch occupies residues 1-29; that stretch reads MAASSTATRLSPPRLHAPTTPSPHLPLRR. A PPM-type phosphatase domain is found at 48–292; the sequence is THLIPHPRKA…DDITVIVAQV (245 aa). Mn(2+) contacts are provided by D79, G80, D210, and D283. The segment at 300–331 is disordered; sequence DEGVDEEKGQGDEQGSAVAVASSEQKEDSITT.

This sequence belongs to the PP2C family. The cofactor is Mg(2+). Requires Mn(2+) as cofactor.

It catalyses the reaction O-phospho-L-seryl-[protein] + H2O = L-seryl-[protein] + phosphate. The catalysed reaction is O-phospho-L-threonyl-[protein] + H2O = L-threonyl-[protein] + phosphate. This is Probable protein phosphatase 2C 1 from Oryza sativa subsp. japonica (Rice).